The chain runs to 287 residues: uncharacterized protein (287 aa).

The signal sequence occupies residues 1–31 (MLGSMALKLRKWIWASIPSLALILSSCSALV).

It belongs to the MG439/MG440 family.

This is an uncharacterized protein from Mycoplasma pneumoniae (strain ATCC 29342 / M129 / Subtype 1) (Mycoplasmoides pneumoniae).